The sequence spans 244 residues: Probable proteasome subunit alpha type-1 (244 aa).

This sequence belongs to the peptidase T1A family. In terms of assembly, the 26S proteasome consists of a 20S proteasome core and two 19S regulatory subunits. The 20S proteasome core is composed of 28 subunits that are arranged in four stacked rings, resulting in a barrel-shaped structure. The two end rings are each formed by seven alpha subunits, and the two central rings are each formed by seven beta subunits. The catalytic chamber with the active sites is on the inside of the barrel.

Its subcellular location is the cytoplasm. It is found in the nucleus. Functionally, the proteasome is a multicatalytic proteinase complex which is characterized by its ability to cleave peptides with Arg, Phe, Tyr, Leu, and Glu adjacent to the leaving group at neutral or slightly basic pH. The proteasome has an ATP-dependent proteolytic activity. The sequence is that of Probable proteasome subunit alpha type-1 from Schizosaccharomyces pombe (strain 972 / ATCC 24843) (Fission yeast).